Here is a 138-residue protein sequence, read N- to C-terminus: Basic phospholipase A2 myotoxin I (138 aa).

The first 16 residues, 1–16 (MRTLWIMAVLLVGVEG), serve as a signal peptide directing secretion. 7 cysteine pairs are disulfide-bonded: Cys42/Cys131, Cys44/Cys60, Cys59/Cys111, Cys65/Cys138, Cys66/Cys104, Cys73/Cys97, and Cys91/Cys102. Residues Tyr43, Gly45, and Gly47 each coordinate Ca(2+). His63 is an active-site residue. Asp64 is a Ca(2+) binding site. Asp105 is an active-site residue.

This sequence belongs to the phospholipase A2 family. Group II subfamily. D49 sub-subfamily. Monomer. Homodimer; non-covalently linked (alternative/compact dimer conformation). Requires Ca(2+) as cofactor. As to expression, expressed by the venom gland.

It is found in the secreted. The catalysed reaction is a 1,2-diacyl-sn-glycero-3-phosphocholine + H2O = a 1-acyl-sn-glycero-3-phosphocholine + a fatty acid + H(+). With respect to regulation, high level of membrane cholesterol content reduces cytolytic activity, whereas low level of membrane cholesterol content increases cytolytic activity. Functionally, snake venom phospholipase A2 (PLA2) that displays local myotoxic activity. It also displays anticoagulant action in plasma and edema-inducing activities. In addition, it shows cytotoxic activity to a variety of cell types and bactericidal activity to a variety of Gram-negative and Gram-positive bacteria. PLA2 catalyzes the calcium-dependent hydrolysis of the 2-acyl groups in 3-sn-phosphoglycerides. The polypeptide is Basic phospholipase A2 myotoxin I (Bothrops asper (Terciopelo)).